The chain runs to 1355 residues: MGTPSHELNTTSSGAEVIQKTLEEGLGRRICVAQPVPFVPQVLGVMIGAGVAVLVTAVLILLVVRRLRVQKTPAPEGPRYRFRKRDKVLFYGRKIMRKVSQSTSSLVDTSVSTTSRPRMKKKLKMLNIAKKILRIQKETPTLQRKEPPPSVLEADLTEGDLANSHLPSEVLYMLKNVRVLGHFEKPLFLELCRHMVFQRLGQGDYVFRPGQPDASIYVVQDGLLELCLPGPDGKECVVKEVVPGDSVNSLLSILDVITGHQHPQRTVSARAARDSTVLRLPVEAFSAVFTKYPESLVRVVQIIMVRLQRVTFLALHNYLGLTNELFSHEIQPLRLFPSPGLPTRTSPVRGSKRVVSTSGTEDTSKETSGRPLDSIGAPLPGPAGDPVKPTSLEAPPAPLLSRCISMPVDISGLQGGPRSDFDMAYERGRISVSLQEEASGGPQTASPRELREQPAGACEYSYCEDESATGGCPFGPYQGRQTSSIFEAAKRELAKLMRIEDPSLLNSRVLLHHAKAGTIIARQGDQDVSLHFVLWGCLHVYQRMIDKAEEVCLFVAQPGELVGQLAVLTGEPLIFTLRAQRDCTFLRISKSHFYEIMRAQPSVVLSAAHTVAARMSPFVRQMDFAIDWTAVEAGRALYRQGDRSDCTYIVLNGRLRSVIQRGSGKKELVGEYGRGDLIGVVEALTRQPRATTVHAVRDTELAKLPEGTLGHIKRRYPQVVTRLIHLLSQKILGNLQQLQGPFPGSGLSVPQHSELTNPASNLSTVAILPVCAEVPMMAFTLELQHALQAIGPTLLLNSDVIRALLGASALDSIQEFRLSGWLAQQEDAHRIVLYQTDTSLTPWTVRCLRQADCILIVGLGDQEPTVGQLEQMLENTAVRALKQLVLLHREEGPGPTRTVEWLNMRSWCSGHLHLRCPRRLFSRRSPAKLHELYEKVFSRRADRHSDFSRLARVLTGNTIALVLGGGGARGCSHIGVLKALEEAGVPVDLVGGTSIGSFIGALYAEERSASRTKQRAREWAKSMTSVLEPVLDLTYPVTSMFTGSAFNRSIHRVFQDKQIEDLWLPYFNVTTDITASAMRVHKDGSLWRYVRASMTLSGYLPPLCDPKDGHLLMDGGYINNLPADIARSMGAKTVIAIDVGSQDETDLSTYGDSLSGWWLLWKRLNPWADKVKVPDMAEIQSRLAYVSCVRQLEVVKSSSYCEYLRPSIDCFKTMDFGKFDQIYDVGYQYGKAVFGGWTRGEVIEKMLTDRRSTDLNESRRADILAFPSSGFTDLAEIVSRIEPPTSYVSDGCADGEESDCLTEYEEDAGPDCSRDEGGSPEGASPSTASEVEEEKSTLRQRRFLPQETPSSVADA.

The Lumenal segment spans residues 1 to 43 (MGTPSHELNTTSSGAEVIQKTLEEGLGRRICVAQPVPFVPQVL). Asn-9 carries N-linked (GlcNAc...) asparagine glycosylation. A helical transmembrane segment spans residues 44–64 (GVMIGAGVAVLVTAVLILLVV). Topologically, residues 65 to 1355 (RRLRVQKTPA…QETPSSVADA (1291 aa)) are cytoplasmic. 179–306 (VLGHFEKPLF…VRVVQIIMVR (128 aa)) provides a ligand contact to a nucleoside 3',5'-cyclic phosphate. Ser-338 carries the post-translational modification Phosphoserine. Positions 338 to 395 (SPGLPTRTSPVRGSKRVVSTSGTEDTSKETSGRPLDSIGAPLPGPAGDPVKPTSLEAP) are disordered. A compositionally biased stretch (polar residues) spans 343-361 (TRTSPVRGSKRVVSTSGTE). Phosphothreonine is present on Thr-345. Phosphoserine is present on residues Ser-346, Ser-356, and Ser-405. A nucleoside 3',5'-cyclic phosphate-binding positions include 492-614 (ELAK…VAAR) and 610-730 (TVAA…LSQK). A PNPLA domain is found at 961–1127 (LVLGGGGARG…INNLPADIAR (167 aa)). Positions 965-970 (GGGARG) match the GXGXXG motif. Positions 992 to 996 (GTSIG) match the GXSXG motif. Ser-994 acts as the Nucleophile in catalysis. Residue Asp-1114 is the Proton acceptor of the active site. Positions 1114 to 1116 (DGG) match the DGA/G motif. The disordered stretch occupies residues 1286–1355 (SYVSDGCADG…QETPSSVADA (70 aa)). Residues 1293–1309 (ADGEESDCLTEYEEDAG) show a composition bias toward acidic residues.

This sequence belongs to the NTE family. Glycosylated. As to expression, expressed in brain, testes and kidney (at protein level). Expressed ubiquitously in brain of young mice. Reaching adulthood, there is a most prominent expression in Purkinje cells, granule cells and pyramidal neurons of the hippocampus and some large neurons in the medulla oblongata, nucleus dentatus and pons.

The protein localises to the endoplasmic reticulum membrane. It carries out the reaction a 1-acyl-sn-glycero-3-phosphocholine + H2O = sn-glycerol 3-phosphocholine + a fatty acid + H(+). The catalysed reaction is 1-hexadecanoyl-sn-glycero-3-phosphocholine + H2O = sn-glycerol 3-phosphocholine + hexadecanoate + H(+). The enzyme catalyses 1-hexadecanoyl-sn-glycero-3-phosphate + H2O = sn-glycerol 3-phosphate + hexadecanoate + H(+). It catalyses the reaction 1-(9Z-octadecenoyl)-sn-glycero-3-phosphocholine + H2O = sn-glycerol 3-phosphocholine + (9Z)-octadecenoate + H(+). It carries out the reaction 1-hexadecanoylglycerol + H2O = glycerol + hexadecanoate + H(+). The catalysed reaction is 2-hexadecanoylglycerol + H2O = glycerol + hexadecanoate + H(+). The enzyme catalyses 1-(9Z-octadecenoyl)-glycerol + H2O = glycerol + (9Z)-octadecenoate + H(+). It catalyses the reaction 2-(9Z-octadecenoyl)-glycerol + H2O = glycerol + (9Z)-octadecenoate + H(+). It carries out the reaction 2-(5Z,8Z,11Z,14Z-eicosatetraenoyl)-glycerol + H2O = glycerol + (5Z,8Z,11Z,14Z)-eicosatetraenoate + H(+). Inhibited by a series a OPs such as mipafox (MPX), phenyl saligenin phosphate (PSP), phenyl dipentyl phosphinate (PDPP), diisopropyl fluorophosphate and paraoxon. Phospholipase B that deacylates intracellular phosphatidylcholine (PtdCho), generating glycerophosphocholine (GroPtdCho). This deacylation occurs at both sn-2 and sn-1 positions of PtdCho. Catalyzes the hydrolysis of several naturally occurring membrane-associated lipids. Hydrolyzes lysophospholipids and monoacylglycerols, preferring the 1-acyl to the 2-acyl isomer. Does not catalyze hydrolysis of di- or triacylglycerols or fatty acid amides. The chain is Patatin-like phospholipase domain-containing protein 6 (Pnpla6) from Mus musculus (Mouse).